Reading from the N-terminus, the 143-residue chain is Large ribosomal subunit protein uL15 (143 aa).

The span at 1–13 (MIRKKKKVKKIRG) shows a compositional bias: basic residues. The interval 1–39 (MIRKKKKVKKIRGSRTCGGGSHKKRRGAGNKGGRGMAGG) is disordered. Positions 29 to 38 (GNKGGRGMAG) are enriched in gly residues.

The protein belongs to the universal ribosomal protein uL15 family. In terms of assembly, part of the 50S ribosomal subunit.

Binds to the 23S rRNA. This Methanocaldococcus jannaschii (strain ATCC 43067 / DSM 2661 / JAL-1 / JCM 10045 / NBRC 100440) (Methanococcus jannaschii) protein is Large ribosomal subunit protein uL15.